Reading from the N-terminus, the 186-residue chain is PRKR-interacting protein 1 (186 aa).

An interaction with EIF2AK2 region spans residues 1–50 (MASSAASSVRPPRPKKEPQALIIPKNAAEEQKLKLERLMKNPDKAVPIPE). Disordered stretches follow at residues 39-61 (MKNP…RPPP) and 119-186 (AAEE…ITGR). The interval 51 to 143 (KMSEWAPRPP…LKEKKLLAKK (93 aa)) is required for RNA-binding. Residues 86–153 (RRREYQRQDY…MKLEQKKQSE (68 aa)) adopt a coiled-coil conformation. The interval 126-138 (KRRKKRQKLKEKK) is required for nuclear localization. A compositionally biased stretch (basic residues) spans 126-143 (KRRKKRQKLKEKKLLAKK). A compositionally biased stretch (polar residues) spans 153-162 (EASSETQEQP). Residues 170–179 (SGTEDEEEDA) show a composition bias toward acidic residues.

It belongs to the PRKRIP1 family. As to quaternary structure, component of the pre-catalytic and post-catalytic spliceosome complexes. Interacts with EIF2AK2.

Its subcellular location is the nucleus. It localises to the nucleolus. Its function is as follows. Required for pre-mRNA splicing as component of the spliceosome. Binds double-stranded RNA. Inhibits EIF2AK2 kinase activity. The protein is PRKR-interacting protein 1 (PRKRIP1) of Bos taurus (Bovine).